A 121-amino-acid polypeptide reads, in one-letter code: Replication protein A 14 kDa subunit (121 aa).

Residues K39 and K88 each participate in a glycyl lysine isopeptide (Lys-Gly) (interchain with G-Cter in ubiquitin) cross-link.

It belongs to the replication factor A protein 3 family. In terms of assembly, component of the canonical replication protein A complex (RPA), a heterotrimer composed of RPA1, RPA2 and RPA3. Also a component of the aRPA, the alternative replication protein A complex, a trimeric complex similar to the replication protein A complex/RPA but where RPA1 and RPA3 are associated with RPA4 instead of RPA2. In terms of processing, ubiquitinated by RFWD3 at stalled replication forks in response to DNA damage: ubiquitination by RFWD3 does not lead to degradation by the proteasome and promotes removal of the RPA complex from stalled replication forks, promoting homologous recombination.

Its subcellular location is the nucleus. Its function is as follows. As part of the heterotrimeric replication protein A complex (RPA/RP-A), binds and stabilizes single-stranded DNA intermediates, that form during DNA replication or upon DNA stress. It prevents their reannealing and in parallel, recruits and activates different proteins and complexes involved in DNA metabolism. Thereby, it plays an essential role both in DNA replication and the cellular response to DNA damage. In the cellular response to DNA damage, the RPA complex controls DNA repair and DNA damage checkpoint activation. Through recruitment of ATRIP activates the ATR kinase a master regulator of the DNA damage response. It is required for the recruitment of the DNA double-strand break repair factors RAD51 and RAD52 to chromatin, in response to DNA damage. Also recruits to sites of DNA damage proteins like XPA and XPG that are involved in nucleotide excision repair and is required for this mechanism of DNA repair. Also plays a role in base excision repair (BER), probably through interaction with UNG. Also recruits SMARCAL1/HARP, which is involved in replication fork restart, to sites of DNA damage. May also play a role in telomere maintenance. RPA3 has its own single-stranded DNA-binding activity and may be responsible for polarity of the binding of the complex to DNA. The polypeptide is Replication protein A 14 kDa subunit (Rpa3) (Mus musculus (Mouse)).